The primary structure comprises 105 residues: uncharacterized protein (105 aa).

One can recognise an ABM domain in the interval 14 to 104 (HYITACLKII…VEWLMKSNVN (91 aa)).

This is an uncharacterized protein from Bacillus subtilis (strain 168).